The sequence spans 270 residues: Orotidine 5'-phosphate decarboxylase (270 aa).

Residues D41, K63 to H65, D95 to T104, Y221, and R239 contribute to the substrate site. K97 acts as the Proton donor in catalysis.

Belongs to the OMP decarboxylase family.

It carries out the reaction orotidine 5'-phosphate + H(+) = UMP + CO2. It functions in the pathway pyrimidine metabolism; UMP biosynthesis via de novo pathway; UMP from orotate: step 2/2. This chain is Orotidine 5'-phosphate decarboxylase (URA3), found in Candida boidinii (Yeast).